The primary structure comprises 361 residues: Ribosomal RNA small subunit methyltransferase H (361 aa).

S-adenosyl-L-methionine is bound by residues 54-56, Asp74, Tyr101, Asp122, and Gln129; that span reads GGH. The interval 318–361 is disordered; sequence ARNSRASSAKLRAAQRLAEGQAPRPRRRNKYAPEGRDEPEGGAA. Residues 348–361 show a composition bias toward basic and acidic residues; that stretch reads YAPEGRDEPEGGAA.

The protein belongs to the methyltransferase superfamily. RsmH family.

The protein resides in the cytoplasm. It catalyses the reaction cytidine(1402) in 16S rRNA + S-adenosyl-L-methionine = N(4)-methylcytidine(1402) in 16S rRNA + S-adenosyl-L-homocysteine + H(+). Its function is as follows. Specifically methylates the N4 position of cytidine in position 1402 (C1402) of 16S rRNA. This chain is Ribosomal RNA small subunit methyltransferase H, found in Nitratidesulfovibrio vulgaris (strain DSM 19637 / Miyazaki F) (Desulfovibrio vulgaris).